The primary structure comprises 864 residues: Alanine--tRNA ligase (864 aa).

Positions 553, 557, 655, and 659 each coordinate Zn(2+). Positions 828–847 (VGGKGGGRPDMAQAGGKDPS) are disordered.

Belongs to the class-II aminoacyl-tRNA synthetase family. The cofactor is Zn(2+).

Its subcellular location is the cytoplasm. The catalysed reaction is tRNA(Ala) + L-alanine + ATP = L-alanyl-tRNA(Ala) + AMP + diphosphate. Functionally, catalyzes the attachment of alanine to tRNA(Ala) in a two-step reaction: alanine is first activated by ATP to form Ala-AMP and then transferred to the acceptor end of tRNA(Ala). Also edits incorrectly charged Ser-tRNA(Ala) and Gly-tRNA(Ala) via its editing domain. The chain is Alanine--tRNA ligase from Hydrogenovibrio crunogenus (strain DSM 25203 / XCL-2) (Thiomicrospira crunogena).